The primary structure comprises 564 residues: MTKEHSEQQKDLRIRSKVISEGVSRTPNRAYLRALGFEDEDFQKPMIGVASTWSEVTPCNMHIDGLARASKQGISEAGASPLIFNTITVSDGISMGTDGMRFSLPSREIIADSIESVVSAENLDALVAIGGCDKNMPGCMIGIARLNLPAVFVYGGTILPGKLDGKDLDAVSAFEGVGQYNNGEIDKEALHKVECAACPGAGACGGMFTANTMSSAIEAMGMSLPGSASHPAVSTNKSKDSRAAGKAVYKLLEKGIYPKDIMTKEAFENAITVVMALGGSTNAILHLLAIAHTIEVDLTLDDFEKIRKRVPHIADLRPSGKYVMAHLDEVGGIPAVMKLLHDKGLIHGDCLTVTGKTVAENLEQQPDLTDNKSIIDFDNPKHATGPLVILKGNLAPEGAVAKISGLSVTYIKGPARVFDSESKATKAILNDEIKPGDVVVIRYAGPKGAPGMPEMLSASSILVGKGLGESVALLTDGRFSGGSHGLVIGHAAPESQVGGPMALLEENDTITIDAEKLEISFDVSDEELERRNKQWQAPPLKANRGTLAKYAKLVSSASKGAITD.

Cys-59 is a [2Fe-2S] cluster binding site. A Mg(2+)-binding site is contributed by Asp-91. Cys-132 lines the [2Fe-2S] cluster pocket. 2 residues coordinate Mg(2+): Asp-133 and Lys-134. An N6-carboxylysine modification is found at Lys-134. Residue Cys-204 coordinates [2Fe-2S] cluster. Glu-454 serves as a coordination point for Mg(2+). Ser-480 functions as the Proton acceptor in the catalytic mechanism.

The protein belongs to the IlvD/Edd family. In terms of assembly, homodimer. [2Fe-2S] cluster serves as cofactor. The cofactor is Mg(2+).

It carries out the reaction (2R)-2,3-dihydroxy-3-methylbutanoate = 3-methyl-2-oxobutanoate + H2O. The catalysed reaction is (2R,3R)-2,3-dihydroxy-3-methylpentanoate = (S)-3-methyl-2-oxopentanoate + H2O. Its pathway is amino-acid biosynthesis; L-isoleucine biosynthesis; L-isoleucine from 2-oxobutanoate: step 3/4. It functions in the pathway amino-acid biosynthesis; L-valine biosynthesis; L-valine from pyruvate: step 3/4. Functionally, functions in the biosynthesis of branched-chain amino acids. Catalyzes the dehydration of (2R,3R)-2,3-dihydroxy-3-methylpentanoate (2,3-dihydroxy-3-methylvalerate) into 2-oxo-3-methylpentanoate (2-oxo-3-methylvalerate) and of (2R)-2,3-dihydroxy-3-methylbutanoate (2,3-dihydroxyisovalerate) into 2-oxo-3-methylbutanoate (2-oxoisovalerate), the penultimate precursor to L-isoleucine and L-valine, respectively. The sequence is that of Dihydroxy-acid dehydratase 2 from Staphylococcus saprophyticus subsp. saprophyticus (strain ATCC 15305 / DSM 20229 / NCIMB 8711 / NCTC 7292 / S-41).